Reading from the N-terminus, the 178-residue chain is Large ribosomal subunit protein uL5 (178 aa).

This sequence belongs to the universal ribosomal protein uL5 family. Part of the 50S ribosomal subunit; part of the 5S rRNA/L5/L18/L25 subcomplex. Contacts the 5S rRNA and the P site tRNA. Forms a bridge to the 30S subunit in the 70S ribosome.

Its function is as follows. This is one of the proteins that bind and probably mediate the attachment of the 5S RNA into the large ribosomal subunit, where it forms part of the central protuberance. In the 70S ribosome it contacts protein S13 of the 30S subunit (bridge B1b), connecting the 2 subunits; this bridge is implicated in subunit movement. Contacts the P site tRNA; the 5S rRNA and some of its associated proteins might help stabilize positioning of ribosome-bound tRNAs. The sequence is that of Large ribosomal subunit protein uL5 from Syntrophomonas wolfei subsp. wolfei (strain DSM 2245B / Goettingen).